The chain runs to 411 residues: Tyrosine--tRNA ligase (411 aa).

Y34 contributes to the L-tyrosine binding site. The 'HIGH' region signature appears at 39–48 (CTATSLHIGS). L-tyrosine contacts are provided by Y171 and Q175. Positions 231–235 (KMGKT) match the 'KMSKS' region motif. K234 lines the ATP pocket. The 67-residue stretch at 345-411 (ITAFELFHEA…GKKRHILVKI (67 aa)) folds into the S4 RNA-binding domain.

The protein belongs to the class-I aminoacyl-tRNA synthetase family. TyrS type 1 subfamily. As to quaternary structure, homodimer.

It localises to the cytoplasm. It carries out the reaction tRNA(Tyr) + L-tyrosine + ATP = L-tyrosyl-tRNA(Tyr) + AMP + diphosphate + H(+). In terms of biological role, catalyzes the attachment of tyrosine to tRNA(Tyr) in a two-step reaction: tyrosine is first activated by ATP to form Tyr-AMP and then transferred to the acceptor end of tRNA(Tyr). This chain is Tyrosine--tRNA ligase, found in Rickettsia bellii (strain RML369-C).